The sequence spans 442 residues: ATP-dependent protease ATPase subunit HslU (442 aa).

Residues isoleucine 18 and 60–65 (GVGKTE) each bind ATP. The disordered stretch occupies residues 136-157 (LPKPKNDWESTETDSSSNTRQV). 3 residues coordinate ATP: aspartate 255, glutamate 320, and arginine 392.

Belongs to the ClpX chaperone family. HslU subfamily. In terms of assembly, a double ring-shaped homohexamer of HslV is capped on each side by a ring-shaped HslU homohexamer. The assembly of the HslU/HslV complex is dependent on binding of ATP.

Its subcellular location is the cytoplasm. In terms of biological role, ATPase subunit of a proteasome-like degradation complex; this subunit has chaperone activity. The binding of ATP and its subsequent hydrolysis by HslU are essential for unfolding of protein substrates subsequently hydrolyzed by HslV. HslU recognizes the N-terminal part of its protein substrates and unfolds these before they are guided to HslV for hydrolysis. The polypeptide is ATP-dependent protease ATPase subunit HslU (Shewanella baltica (strain OS185)).